Consider the following 227-residue polypeptide: Bone marrow proteoglycan (227 aa).

An N-terminal signal peptide occupies residues 1–16; sequence MKFPLLLALLVGGAFA. Residues 17–110 constitute a propeptide, acidic; it reads LHLSSEASDS…TSLMGDSGFK (94 aa). The interval 21–105 is disordered; that stretch reads SEASDSKSPL…KEEDTTSLMG (85 aa). Residue serine 24 is glycosylated (O-linked (GalNAc...) serine). Positions 34 to 46 are enriched in basic and acidic residues; it reads SLPREAEISRPEV. Positions 58–70 are enriched in acidic residues; it reads LEEEEEEEEEEGS. O-linked (Xyl...) (chondroitin sulfate) serine glycosylation is present at serine 70. The C-type lectin domain maps to 128 to 227; it reads LVCRSCYRGT…GKRRPFICAY (100 aa). 2 disulfide bridges follow: cysteine 130–cysteine 225 and cysteine 202–cysteine 217.

Nitrated.

It localises to the secreted. Functionally, cytotoxin and helminthotoxin. MBP also induces non-cytolytic histamine release from basophils. It is involved in antiparasitic defense mechanisms and immune hypersensitivity reactions. This Rattus norvegicus (Rat) protein is Bone marrow proteoglycan (Prg2).